The chain runs to 70 residues: Peptide BmKn2 (70 aa).

A signal peptide spans 1-23 (MKSQTFFLLFLVVLLLAISQSEA). Residue Phe-36 is modified to Phenylalanine amide. Positions 40 to 70 (SMRDMDTMKYLYDPSLSAADLKTLQKLMENY) are excised as a propeptide.

It belongs to the non-disulfide-bridged peptide (NDBP) superfamily. Short antimicrobial peptide (group 4) family. Expressed by the venom gland.

It localises to the secreted. The protein localises to the target cell membrane. In terms of biological role, antimicrobial peptide with potent activity against bacteria. Has strong antibacterial activity against Gram-positive bacteria S.aureus, M.luteus, B.subtilis, and Gram-negative bacteria E.coli, P.aeruginosa and N.gonorrhoeae. Also shows low activity against HIV-1 PV. The protein is Peptide BmKn2 of Olivierus martensii (Manchurian scorpion).